A 784-amino-acid chain; its full sequence is 1-phosphatidylinositol 4,5-bisphosphate phosphodiesterase delta-3-A (784 aa).

Residues 1-25 (MLGRKKNPETVQTESKSVESKTHDP) are disordered. Residues 16 to 25 (KSVESKTHDP) show a composition bias toward basic and acidic residues. The region spanning 38–149 (LLMLQGSKMM…WVRGIRTLKD (112 aa)) is the PH domain. The substrate binding stretch occupies residues 48 to 78 (KVRSQRWRKDRRLKLLEDCVTVWCESSKTSR). 3 EF-hand domains span residues 159–194 (KLDHWIRGYLRRADQNQDGKMSYDEVKHLLQLINID), 195–230 (LNEQYARTLFKKCDRSCDGRLDHVEIEEFCREMMRR), and 227–262 (MMRRPELDAVFRHYSGNGCVLTTLELRDFLGDQGED). The Ca(2+) site is built by D172, N174, D176, K178, E183, D208, S210, D212, R214, and E219. Positions 313–458 (QDMSKPLAHY…LKGRILLKGK (146 aa)) constitute a PI-PLC X-box domain. H328 is an active-site residue. Ca(2+) contacts are provided by N329, E358, and D360. H373 is an active-site residue. E407 is a Ca(2+) binding site. Substrate contacts are provided by K456 and K458. Residues 473-498 (FTNSSDEESVAGGNKKESKKDLARSA) form a disordered region. Over residues 486–495 (NKKESKKDLA) the composition is skewed to basic and acidic residues. One can recognise a PI-PLC Y-box domain in the interval 506-621 (LSDLVVYCQS…GYVLKPEFLC (116 aa)). S534 and R561 together coordinate substrate. Residues 621–750 (CDPKSDFDPE…TGYRHVHLLK (130 aa)) form the C2 domain. 5 residues coordinate Ca(2+): I664, D666, N690, D719, and D721.

Ca(2+) is required as a cofactor.

It localises to the membrane. The protein localises to the cytoplasm. It is found in the cleavage furrow. The catalysed reaction is a 1,2-diacyl-sn-glycero-3-phospho-(1D-myo-inositol-4,5-bisphosphate) + H2O = 1D-myo-inositol 1,4,5-trisphosphate + a 1,2-diacyl-sn-glycerol + H(+). Its function is as follows. Hydrolyzes the phosphatidylinositol 4,5-bisphosphate (PIP2) to generate 2 second messenger molecules diacylglycerol (DAG) and inositol 1,4,5-trisphosphate (IP3). DAG mediates the activation of protein kinase C (PKC), while IP3 releases Ca(2+) from intracellular stores. The chain is 1-phosphatidylinositol 4,5-bisphosphate phosphodiesterase delta-3-A (plcd3a) from Danio rerio (Zebrafish).